The chain runs to 695 residues: Threonine--tRNA ligase 1, cytoplasmic (695 aa).

A disordered region spans residues 1–21 (MSEEKASSPSGKMDGEKPLNP). Residues 51–115 (DSKPIKVTLP…ETDCTLELLK (65 aa)) enclose the TGS domain. K215 is subject to N6-acetyllysine. Position 218 is a phosphothreonine (T218). At Y270 the chain carries Phosphotyrosine. A Phosphothreonine modification is found at T425.

Belongs to the class-II aminoacyl-tRNA synthetase family. In terms of assembly, homodimer. Post-translationally, ISGylated.

It is found in the cytoplasm. The enzyme catalyses tRNA(Thr) + L-threonine + ATP = L-threonyl-tRNA(Thr) + AMP + diphosphate + H(+). Functionally, catalyzes the attachment of threonine to tRNA(Thr) in a two-step reaction: threonine is first activated by ATP to form Thr-AMP and then transferred to the acceptor end of tRNA(Thr). Also edits incorrectly charged tRNA(Thr) via its editing domain, at the post-transfer stage. The protein is Threonine--tRNA ligase 1, cytoplasmic (Tars1) of Rattus norvegicus (Rat).